A 501-amino-acid chain; its full sequence is Probable histidine--tRNA ligase, mitochondrial (501 aa).

Positions 32–54 (TNSNNNNNNNNNNNNNNNNNKNI) are disordered. A compositionally biased stretch (low complexity) spans 33-54 (NSNNNNNNNNNNNNNNNNNKNI).

It belongs to the class-II aminoacyl-tRNA synthetase family.

Its subcellular location is the mitochondrion matrix. The catalysed reaction is tRNA(His) + L-histidine + ATP = L-histidyl-tRNA(His) + AMP + diphosphate + H(+). This is Probable histidine--tRNA ligase, mitochondrial (mhisS) from Dictyostelium discoideum (Social amoeba).